The primary structure comprises 942 residues: Protein inturned (942 aa).

2 disordered regions span residues 1 to 56 and 128 to 156; these read MAGL…PEWL and LPRRHHKKSSSNNGPVSILKHQSSQKTGV. Acidic residues predominate over residues 22-32; sequence SQEEEEEEGDS. The segment covering 33 to 48 has biased composition (low complexity); sequence DAGASSLGSYSSASSD. Positions 137 to 156 are enriched in polar residues; it reads SSNNGPVSILKHQSSQKTGV. The PDZ domain maps to 185–267; it reads LLEVLVGIIH…PMQVKLTFEN (83 aa). A phosphoserine mark is found at S674 and S678. A disordered region spans residues 707-751; the sequence is KARKPSPSRIGGGREPTEGEESAGLSPHATPDAVRKQRESEGSDD.

It belongs to the inturned family. As to quaternary structure, component of the CPLANE (ciliogenesis and planar polarity effectors) complex, composed of INTU, FUZ and WDPCP. Interacts with CPLANE1. Interacts with NPHP4 and DAAM1; INTU is mediating the interaction between NPHP4 and DAAM1. In terms of tissue distribution, widely expressed in E8.5 and E9.5 wild type embryos. Present in various adult organs (at protein level).

It localises to the cytoplasm. The protein localises to the cell surface. Its subcellular location is the cytoskeleton. It is found in the cilium basal body. The protein resides in the microtubule organizing center. It localises to the centrosome. The protein localises to the centriole. Plays a key role in ciliogenesis and embryonic development. Regulator of cilia formation by controlling the organization of the apical actin cytoskeleton and the positioning of the basal bodies at the apical cell surface, which in turn is essential for the normal orientation of elongating ciliary microtubules. Plays a key role in definition of cell polarity via its role in ciliogenesis but not via conversion extension. Has an indirect effect on hedgehog signaling. Proposed to function as core component of the CPLANE (ciliogenesis and planar polarity effectors) complex involved in the recruitment of peripheral IFT-A proteins to basal bodies. Required for recruitment of CPLANE2 to the mother centriole. Binds phosphatidylinositol 3-phosphate with highest affinity, followed by phosphatidylinositol 4-phosphate and phosphatidylinositol 5-phosphate. The chain is Protein inturned (Intu) from Mus musculus (Mouse).